Here is a 1049-residue protein sequence, read N- to C-terminus: Multiple C2 domain and transmembrane region protein 16 (1049 aa).

Residues 1–112 (MATTRKLVVE…VGQGEEALIY (112 aa)) form the C2 1 domain. Residues 136 to 249 (DEKPPPLKPT…PPQNQPDGED (114 aa)) form a disordered region. 2 stretches are compositionally biased toward basic and acidic residues: residues 153–170 (VEEK…ESKP) and 226–238 (ESDK…KPVE). C2 domains lie at 302 to 426 (TSEI…PQWY), 460 to 582 (TAGN…SRWL), and 617 to 745 (VCSD…RNTY). Residues Ser-338, Asp-390, Thr-393, and Ser-398 each contribute to the Ca(2+) site. Transmembrane regions (helical) follow at residues 883 to 903 (VMLI…LFVI) and 989 to 1009 (ATGI…LVPT).

It belongs to the MCTP family. The cofactor is Ca(2+). As to expression, expressed in the vascular tissues of roots, cotyledons and rosette leaves. Accumulates in roots meristems and shoot apical meristems (SAMs). Observed in flowers.

It localises to the endoplasmic reticulum membrane. Its function is as follows. May function as a signaling molecule by regulating the trafficking of other regulators. The chain is Multiple C2 domain and transmembrane region protein 16 from Arabidopsis thaliana (Mouse-ear cress).